Here is a 264-residue protein sequence, read N- to C-terminus: Protein FAM228B (264 aa).

It belongs to the FAM228 family.

The chain is Protein FAM228B (FAM228B) from Bos taurus (Bovine).